A 74-amino-acid chain; its full sequence is Anionic peptide clone 10 (74 aa).

Positions 1–24 are cleaved as a signal peptide; the sequence is MVSKSLIVLLLVSVLVSTFFTTEA.

This sequence belongs to the non-disulfide-bridged peptide (NDBP) superfamily. Long chain multifunctional peptide (group 2) family. In terms of tissue distribution, expressed by the venom gland.

Its subcellular location is the secreted. May be an antimicrobial peptide. In Tityus costatus (Brazilian scorpion), this protein is Anionic peptide clone 10.